Reading from the N-terminus, the 211-residue chain is Transcription antitermination protein NusB (211 aa).

It belongs to the NusB family.

Its function is as follows. Involved in transcription antitermination. Required for transcription of ribosomal RNA (rRNA) genes. Binds specifically to the boxA antiterminator sequence of the ribosomal RNA (rrn) operons. This Gloeobacter violaceus (strain ATCC 29082 / PCC 7421) protein is Transcription antitermination protein NusB.